A 564-amino-acid chain; its full sequence is Pyruvate decarboxylase (564 aa).

Pyruvate-binding residues include D28 and H115. Thiamine diphosphate contacts are provided by residues T390 and G413–I415. Position 444 (D444) interacts with Mg(2+). Residues G445–S446 and N471–I476 each bind thiamine diphosphate. The Mg(2+) site is built by N471 and G473. Position 477 (E477) interacts with pyruvate.

This sequence belongs to the TPP enzyme family. In terms of assembly, homotetramer. Mg(2+) serves as cofactor. Requires thiamine diphosphate as cofactor.

The enzyme catalyses a 2-oxocarboxylate + H(+) = an aldehyde + CO2. It catalyses the reaction pyruvate + H(+) = acetaldehyde + CO2. The sequence is that of Pyruvate decarboxylase (PDC) from Hanseniaspora uvarum (Yeast).